Reading from the N-terminus, the 448-residue chain is MPGIKRILTVTILALCLPSPGNAQAQCTNGFDLDRQSGQCLDIDECRTIPEACRGDMMCVNQNGGYLCIPRTNPVYRGPYSNPYSTPYSGPYPAAAPPLSAPNYPTISRPLICRFGYQMDESNQCVDVDECATDSHQCNPTQICINTEGGYTCSCTDGYWLLEGQCLDIDECRYGYCQQLCANVPGSYSCTCNPGFTLNEDGRSCQDVNECATENPCVQTCVNTYGSFICRCDPGYELEEDGVHCSDMDECSFSEFLCQHECVNQPGTYFCSCPPGYILLDDNRSCQDINECEHRNHTCNLQQTCYNLQGGFKCIDPIRCEEPYLRISDNRCMCPAENPGCRDQPFTILYRDMDVVSGRSVPADIFQMQATTRYPGAYYIFQIKSGNEGREFYMRQTGPISATLVMTRPIKGPREIQLDLEMITVNTVINFRGSSVIRLRIYVSQYPF.

An N-terminal signal peptide occupies residues 1–23; it reads MPGIKRILTVTILALCLPSPGNA. In terms of domain architecture, EGF-like 1; calcium-binding spans 42–82; sequence DIDECRTIPEACRGDMMCVNQNGGYLCIPRTNPVYRGPYSN. 17 disulfide bridges follow: cysteine 46–cysteine 59, cysteine 53–cysteine 68, cysteine 131–cysteine 144, cysteine 138–cysteine 153, cysteine 155–cysteine 166, cysteine 172–cysteine 181, cysteine 177–cysteine 190, cysteine 192–cysteine 205, cysteine 211–cysteine 221, cysteine 217–cysteine 230, cysteine 232–cysteine 245, cysteine 251–cysteine 262, cysteine 258–cysteine 271, cysteine 273–cysteine 286, cysteine 292–cysteine 305, cysteine 299–cysteine 314, and cysteine 320–cysteine 332. The Cell attachment site motif lies at 54 to 56; the sequence is RGD. Residues 127–167 enclose the EGF-like 2; calcium-binding domain; that stretch reads DVDECATDSHQCNPTQICINTEGGYTCSCTDGYWLLEGQCL. Residues 168-206 form the EGF-like 3; calcium-binding domain; the sequence is DIDECRYGYCQQLCANVPGSYSCTCNPGFTLNEDGRSCQ. An EGF-like 4; calcium-binding domain is found at 207–246; the sequence is DVNECATENPCVQTCVNTYGSFICRCDPGYELEEDGVHCS. The interaction with LOXL1 stretch occupies residues 245-448; it reads CSDMDECSFS…LRIYVSQYPF (204 aa). One can recognise an EGF-like 5; calcium-binding domain in the interval 247-287; that stretch reads DMDECSFSEFLCQHECVNQPGTYFCSCPPGYILLDDNRSCQ. Asparagine 283 and asparagine 296 each carry an N-linked (GlcNAc...) asparagine glycan. The 46-residue stretch at 288–333 folds into the EGF-like 6; calcium-binding domain; the sequence is DINECEHRNHTCNLQQTCYNLQGGFKCIDPIRCEEPYLRISDNRCM.

It belongs to the fibulin family. In terms of assembly, homodimer. Monomer, homodimerizes in presence of Ca(2+). Interacts with ELN. Interacts (via N-terminus) with the integrins ITGAV/ITGB3, ITGAV/ITGB5 and ITGA9/ITGB1. Interacts with FBN1 (via N-terminal domain). Forms a ternary complex with ELN and FBN1. Interacts with EFEMP2 with moderate affinity. Interacts with LOXL1. N-glycosylated. As to expression, expressed in skin fibroblasts (at protein level). Expressed predominantly in heart, ovary, and colon but also in kidney, pancreas, testis, lung and placenta. Not detectable in brain, liver, thymus, prostate, or peripheral blood leukocytes.

The protein resides in the secreted. The protein localises to the extracellular space. Its subcellular location is the extracellular matrix. Its function is as follows. Essential for elastic fiber formation, is involved in the assembly of continuous elastin (ELN) polymer and promotes the interaction of microfibrils and ELN. Stabilizes and organizes elastic fibers in the skin, lung and vasculature. Promotes adhesion of endothelial cells through interaction of integrins and the RGD motif. Vascular ligand for integrin receptors which may play a role in vascular development and remodeling. May act as an adapter that mediates the interaction between FBN1 and ELN. The protein is Fibulin-5 (FBLN5) of Homo sapiens (Human).